The following is a 174-amino-acid chain: MTTIVSVRRNNQVVIAGDGQVSLGNTVMKGNAKKVRRLYHNKVLAGFAGGTADAFTLFERFEAKLEMHQGHLLRSAVELAKDWRTDRMLRKLEALLVVADAETSLIITGNGDVVQPEHDLVAIGSGGNYAQAAALALLQNTELSALEIAEKSLTIAADICVFTNQFKTIEELNY.

Residue T2 is part of the active site. Na(+) contacts are provided by A157, C160, and T163.

This sequence belongs to the peptidase T1B family. HslV subfamily. In terms of assembly, a double ring-shaped homohexamer of HslV is capped on each side by a ring-shaped HslU homohexamer. The assembly of the HslU/HslV complex is dependent on binding of ATP.

It is found in the cytoplasm. The enzyme catalyses ATP-dependent cleavage of peptide bonds with broad specificity.. Allosterically activated by HslU binding. Protease subunit of a proteasome-like degradation complex believed to be a general protein degrading machinery. In Shewanella baltica (strain OS195), this protein is ATP-dependent protease subunit HslV.